We begin with the raw amino-acid sequence, 1269 residues long: Protein flightless-1 homolog (1269 aa).

M1 is modified (N-acetylmethionine). Residues 1 to 427 (MEATGVLPFV…SGPKDPMARK (427 aa)) form an interaction with LRRFIP1 and LRRFIP2 region. 16 LRR repeats span residues 7–32 (LPFV…VKAM), 33–55 (TSLR…LAAL), 56–78 (QKLE…LSSL), 80–103 (SLRA…IFKL), 104–126 (DDLS…LENA), 127–149 (KNML…LFIN), 150–173 (LTDL…MRRL), 175–196 (HLQT…QLPA), 197–222 (MTAL…LEGL), 223–245 (SNLA…LYTL), 247–268 (SLRR…IDQW), 269–291 (VHVE…ICKL), 293–316 (KLKK…IGKL), 318–339 (NLEE…LCRC), 340–363 (PKLR…HFLT), and 365–385 (IEVL…PADR). An N6-acetyllysine modification is found at K21. S406 carries the phosphoserine modification. Phosphoserine; by SGK3 is present on S436. The segment at 452–473 (VAQEKNKKQEESADARAPSGKV) is disordered. The segment covering 453–465 (AQEKNKKQEESAD) has biased composition (basic and acidic residues). An interaction with ACTL6A region spans residues 495-827 (VGQLPGLTIW…TVSRSLEGTE (333 aa)). Gelsolin-like repeat units follow at residues 509 to 591 (FVPV…EEFL), 629 to 703 (NIKL…PEFW), and 758 to 831 (ELMP…AQVF). A Phosphothreonine; by SGK3 modification is found at T818. 2 positions are modified to phosphoserine: S856 and S860. The disordered stretch occupies residues 951-975 (KKEDKEEKAEGKEGEEATAEAEEKQ). The segment covering 952 to 965 (KEDKEEKAEGKEGE) has biased composition (basic and acidic residues). Positions 966 to 975 (EATAEAEEKQ) are enriched in acidic residues. 2 Gelsolin-like repeats span residues 1075-1143 (TDSS…PENF) and 1181-1254 (KCSD…QHAF).

As to quaternary structure, interacts with actin, ACTL6A, NCOA2 and CARM1. Interacts with LRRFIP1, LRRFIP2 and MYD88. Upon LPS stimulation, LRRFIP2 competes for MYD88-binding. LRRFIP1 constitutively blocks the interaction with MyD88, even in the absence of LPS. Interacts with the nuclear receptors ESR1 and THRB. Interacts with SGK3. Interacts (via the gelsolin-like region) with TMOD1. Interacts with (via the gelsolin-like region) TMOD3. Interacts with LMOD2, VCL, GSN and DES. As to expression, strongest expression in skeletal muscle with high expression also in the heart and lung.

The protein resides in the nucleus. It localises to the cytoplasm. The protein localises to the cytoskeleton. It is found in the microtubule organizing center. Its subcellular location is the centrosome. The protein resides in the cell projection. It localises to the podosome. The protein localises to the cell junction. It is found in the focal adhesion. Functionally, is a regulator of actin polymerization, required for proper myofibril organization and regulation of the length of sarcomeric thin filaments. It also plays a role in the assembly of cardiomyocyte cell adhesion complexes. Regulates cytoskeletal rearrangements involved in cytokinesis and cell migration, by inhibiting Rac1-dependent paxillin phosphorylation. May play a role as coactivator in transcriptional activation by hormone-activated nuclear receptors (NR) and acts in cooperation with NCOA2 and CARM1. Involved in estrogen hormone signaling. This chain is Protein flightless-1 homolog (FLII), found in Homo sapiens (Human).